The following is a 469-amino-acid chain: Glutamate--tRNA ligase (469 aa).

Residues 11-21 (PSPTGFIHLGN) carry the 'HIGH' region motif. Positions 114 to 131 (QREAGEKPRYDGTWRPEP) are enriched in basic and acidic residues. Residues 114 to 139 (QREAGEKPRYDGTWRPEPGKVLPEPP) are disordered. The short motif at 243–247 (KMSKR) is the 'KMSKS' region element. K246 lines the ATP pocket.

The protein belongs to the class-I aminoacyl-tRNA synthetase family. Glutamate--tRNA ligase type 1 subfamily. As to quaternary structure, monomer.

The protein resides in the cytoplasm. It catalyses the reaction tRNA(Glu) + L-glutamate + ATP = L-glutamyl-tRNA(Glu) + AMP + diphosphate. In terms of biological role, catalyzes the attachment of glutamate to tRNA(Glu) in a two-step reaction: glutamate is first activated by ATP to form Glu-AMP and then transferred to the acceptor end of tRNA(Glu). This chain is Glutamate--tRNA ligase, found in Paraburkholderia xenovorans (strain LB400).